The sequence spans 474 residues: Transcription termination factor Rho (474 aa).

Positions 1–60 (MTEELDNTPSPAGDIPQETLPKPLPAPEETAGEQPAAAPEENRGNAVREEEEAAPVLEQI) are disordered. The Rho RNA-BD domain maps to 107-182 (EVVVSGVMEQ…ASVISVEDIP (76 aa)). ATP is bound by residues 226 to 231 (GKGQRG), 238 to 243 (RGGKTV), and arginine 269.

Belongs to the Rho family. As to quaternary structure, homohexamer. The homohexamer assembles into an open ring structure.

Its function is as follows. Facilitates transcription termination by a mechanism that involves Rho binding to the nascent RNA, activation of Rho's RNA-dependent ATPase activity, and release of the mRNA from the DNA template. The sequence is that of Transcription termination factor Rho from Akkermansia muciniphila (strain ATCC BAA-835 / DSM 22959 / JCM 33894 / BCRC 81048 / CCUG 64013 / CIP 107961 / Muc).